A 258-amino-acid polypeptide reads, in one-letter code: Acetylglutamate kinase (258 aa).

Residues 41-42, Arg-63, and Asn-156 each bind substrate; that span reads GG.

It belongs to the acetylglutamate kinase family. ArgB subfamily.

The protein resides in the cytoplasm. The enzyme catalyses N-acetyl-L-glutamate + ATP = N-acetyl-L-glutamyl 5-phosphate + ADP. The protein operates within amino-acid biosynthesis; L-arginine biosynthesis; N(2)-acetyl-L-ornithine from L-glutamate: step 2/4. Catalyzes the ATP-dependent phosphorylation of N-acetyl-L-glutamate. The polypeptide is Acetylglutamate kinase (Bacillus licheniformis (strain ATCC 14580 / DSM 13 / JCM 2505 / CCUG 7422 / NBRC 12200 / NCIMB 9375 / NCTC 10341 / NRRL NRS-1264 / Gibson 46)).